The sequence spans 360 residues: tRNA-specific 2-thiouridylase MnmA (360 aa).

ATP is bound by residues 8–15 (GMSGGVDS) and M34. An interaction with target base in tRNA region spans residues 94–96 (NPD). Residue C99 is the Nucleophile of the active site. The cysteines at positions 99 and 195 are disulfide-linked. G123 serves as a coordination point for ATP. Residues 145 to 147 (KDQ) are interaction with tRNA. The Cysteine persulfide intermediate role is filled by C195. An interaction with tRNA region spans residues 307-308 (RY).

This sequence belongs to the MnmA/TRMU family.

It is found in the cytoplasm. The enzyme catalyses S-sulfanyl-L-cysteinyl-[protein] + uridine(34) in tRNA + AH2 + ATP = 2-thiouridine(34) in tRNA + L-cysteinyl-[protein] + A + AMP + diphosphate + H(+). Functionally, catalyzes the 2-thiolation of uridine at the wobble position (U34) of tRNA, leading to the formation of s(2)U34. The protein is tRNA-specific 2-thiouridylase MnmA of Methylobacillus flagellatus (strain ATCC 51484 / DSM 6875 / VKM B-1610 / KT).